The chain runs to 539 residues: Netrin-G1 (539 aa).

The first 28 residues, 1–28, serve as a signal peptide directing secretion; the sequence is MYLSRFLSIHALWVTVSSVMQPYPLVWG. 3 disulfides stabilise this stretch: cysteine 33/cysteine 50, cysteine 72/cysteine 92, and cysteine 80/cysteine 88. Positions 46–296 constitute a Laminin N-terminal domain; that stretch reads DYMACQPEST…AISDIKVRGR (251 aa). The tract at residues 80–91 is NGL discriminant loop I; sequence CAMGNPYMCNNE. N-linked (GlcNAc...) asparagine glycosylation occurs at asparagine 133. Cysteine 182 and cysteine 206 are joined by a disulfide. Residues 208–214 are NGL discriminant loop II; it reads EEYSTGY. Positions 273–275 are NGL discriminant loop III; it reads EIF. Intrachain disulfides connect cysteine 297–cysteine 306, cysteine 299–cysteine 315, cysteine 317–cysteine 326, cysteine 329–cysteine 354, cysteine 364–cysteine 373, cysteine 366–cysteine 384, cysteine 387–cysteine 396, cysteine 399–cysteine 417, cysteine 420–cysteine 432, cysteine 422–cysteine 438, cysteine 440–cysteine 449, cysteine 452–cysteine 462, cysteine 467–cysteine 480, cysteine 474–cysteine 486, and cysteine 488–cysteine 497. Laminin EGF-like domains are found at residues 297–356, 364–419, and 420–469; these read CKCN…TCIP, CECF…VCIE, and CYCN…VCDN. N-linked (GlcNAc...) asparagine glycosylation occurs at asparagine 320. N-linked (GlcNAc...) asparagine glycosylation occurs at asparagine 406. N-linked (GlcNAc...) asparagine glycosylation is present at asparagine 433. Serine 510 carries GPI-anchor amidated serine lipidation. Positions 511-539 are cleaved as a propeptide — removed in mature form; that stretch reads DSGQGAPPHGSPALLLLTTLLGTASPLVF.

In terms of assembly, interacts with NGL1. In terms of processing, N-glycosylated. Highly expressed in the thalamus, with very low expression, if any, in other tissues.

The protein localises to the cell membrane. Functionally, involved in controlling patterning and neuronal circuit formation at the laminar, cellular, subcellular and synaptic levels. Promotes neurite outgrowth of both axons and dendrites. The sequence is that of Netrin-G1 (NTNG1) from Homo sapiens (Human).